Here is a 212-residue protein sequence, read N- to C-terminus: Large ribosomal subunit protein mL48 (212 aa).

A mitochondrion-targeting transit peptide spans 1–28; it reads MNGALGKVLCLKNDTIFKQAFSLLRFRT. N6-succinyllysine is present on lysine 199.

It belongs to the mitochondrion-specific ribosomal protein mL48 family. Component of the mitochondrial ribosome large subunit (39S) which comprises a 16S rRNA and about 50 distinct proteins. Interacts with OXA1L.

It localises to the mitochondrion. The sequence is that of Large ribosomal subunit protein mL48 (MRPL48) from Bos taurus (Bovine).